The sequence spans 181 residues: Alkyl hydroperoxide reductase AhpD (181 aa).

The Proton donor role is filled by Cys-131. Cys-131 and Cys-134 form a disulfide bridge. Catalysis depends on Cys-134, which acts as the Cysteine sulfenic acid (-SOH) intermediate.

Belongs to the AhpD family.

The catalysed reaction is N(6)-[(R)-dihydrolipoyl]-L-lysyl-[lipoyl-carrier protein] + a hydroperoxide = N(6)-[(R)-lipoyl]-L-lysyl-[lipoyl-carrier protein] + an alcohol + H2O. In terms of biological role, antioxidant protein with alkyl hydroperoxidase activity. Required for the reduction of the AhpC active site cysteine residues and for the regeneration of the AhpC enzyme activity. In Bradyrhizobium sp. (strain ORS 278), this protein is Alkyl hydroperoxide reductase AhpD.